Here is a 161-residue protein sequence, read N- to C-terminus: Small ribosomal subunit protein uS9 (161 aa).

Disordered stretches follow at residues Met1–Ala27 and Lys142–Arg161.

Belongs to the universal ribosomal protein uS9 family.

This is Small ribosomal subunit protein uS9 from Clavibacter michiganensis subsp. michiganensis (strain NCPPB 382).